A 446-amino-acid polypeptide reads, in one-letter code: NADP-specific glutamate dehydrogenase (446 aa).

Substrate contacts are provided by lysine 92, glutamine 113, and lysine 116. The active-site Proton donor is lysine 128. Glycine 167 contacts substrate. Residues threonine 211 and asparagine 242 each contribute to the NADP(+) site. Serine 379 contributes to the substrate binding site.

The protein belongs to the Glu/Leu/Phe/Val dehydrogenases family. As to quaternary structure, homohexamer.

The enzyme catalyses L-glutamate + NADP(+) + H2O = 2-oxoglutarate + NH4(+) + NADPH + H(+). Functionally, catalyzes the reversible oxidative deamination of glutamate to a-ketoglutarate and ammonia. In Unknown prokaryotic organism, this protein is NADP-specific glutamate dehydrogenase (gdhA).